A 140-amino-acid chain; its full sequence is Large ribosomal subunit protein uL14x/uL14z/uL14y (140 aa).

Belongs to the universal ribosomal protein uL14 family.

The chain is Large ribosomal subunit protein uL14x/uL14z/uL14y (RPL23A) from Arabidopsis thaliana (Mouse-ear cress).